Here is a 317-residue protein sequence, read N- to C-terminus: DNA-directed RNA polymerase subunit alpha (317 aa).

Residues 1–234 (MKQFNKPEFG…SHFDVFTTLA (234 aa)) are alpha N-terminal domain (alpha-NTD). Residues 249 to 317 (EEKELDKPVE…AALELTFKQN (69 aa)) form an alpha C-terminal domain (alpha-CTD) region.

This sequence belongs to the RNA polymerase alpha chain family. In terms of assembly, homodimer. The RNAP catalytic core consists of 2 alpha, 1 beta, 1 beta' and 1 omega subunit. When a sigma factor is associated with the core the holoenzyme is formed, which can initiate transcription.

It catalyses the reaction RNA(n) + a ribonucleoside 5'-triphosphate = RNA(n+1) + diphosphate. Its function is as follows. DNA-dependent RNA polymerase catalyzes the transcription of DNA into RNA using the four ribonucleoside triphosphates as substrates. The protein is DNA-directed RNA polymerase subunit alpha of Mesoplasma florum (strain ATCC 33453 / NBRC 100688 / NCTC 11704 / L1) (Acholeplasma florum).